We begin with the raw amino-acid sequence, 355 residues long: 3-dehydroquinate synthase (355 aa).

Residues Gly105–Asp109, Thr129–Ser130, Lys142, Lys151, and Thr169–Thr172 contribute to the NAD(+) site. Positions 184, 246, and 263 each coordinate Zn(2+).

This sequence belongs to the sugar phosphate cyclases superfamily. Dehydroquinate synthase family. NAD(+) serves as cofactor. It depends on Co(2+) as a cofactor. Requires Zn(2+) as cofactor.

The protein resides in the cytoplasm. The catalysed reaction is 7-phospho-2-dehydro-3-deoxy-D-arabino-heptonate = 3-dehydroquinate + phosphate. It participates in metabolic intermediate biosynthesis; chorismate biosynthesis; chorismate from D-erythrose 4-phosphate and phosphoenolpyruvate: step 2/7. Its function is as follows. Catalyzes the conversion of 3-deoxy-D-arabino-heptulosonate 7-phosphate (DAHP) to dehydroquinate (DHQ). In Streptococcus agalactiae serotype V (strain ATCC BAA-611 / 2603 V/R), this protein is 3-dehydroquinate synthase.